The sequence spans 362 residues: Oxysterol-binding protein 5 (362 aa).

This sequence belongs to the OSBP family.

The protein is Oxysterol-binding protein 5 (osbE) of Dictyostelium discoideum (Social amoeba).